A 245-amino-acid chain; its full sequence is Collagen triple helix repeat-containing protein 1 (245 aa).

The first 32 residues, 1-32, serve as a signal peptide directing secretion; that stretch reads MHPQGRAAPPQLLLGLFLVLLLLLQLSAPISA. One can recognise a Collagen-like domain in the interval 59–92; sequence QGPAGVPGRDGSPGANGIPGTPGIPGRDGFKGEK. The disordered stretch occupies residues 64–87; that stretch reads VPGRDGSPGANGIPGTPGIPGRDG. The N-linked (GlcNAc...) asparagine glycan is linked to asparagine 188.

N-glycosylated.

It localises to the secreted. The protein localises to the extracellular space. Its subcellular location is the extracellular matrix. In terms of biological role, may act as a negative regulator of collagen matrix deposition. The chain is Collagen triple helix repeat-containing protein 1 (Cthrc1) from Mus musculus (Mouse).